Consider the following 277-residue polypeptide: Deoxyguanosine kinase, mitochondrial (277 aa).

The N-terminal 39 residues, 1–39 (MAAGRFLLRRLRASFRSPLRNALVDAPHARAMHDGGGPR), are a transit peptide targeting the mitochondrion. ATP is bound at residue 45-53 (GNIAVGKST). The substrate site is built by E70, Y100, Q111, and R118. The active-site Proton acceptor is the E141. Residues R142 and D147 each contribute to the substrate site. Residue 206–208 (RDR) coordinates ATP. E211 serves as a coordination point for substrate. 254 to 256 (EDF) contributes to the ATP binding site.

This sequence belongs to the DCK/DGK family. In terms of assembly, homodimer. Spleen and thymus. Expressed at much lower levels in the brain and liver.

It is found in the mitochondrion. The protein resides in the cytoplasm. It carries out the reaction 2'-deoxyguanosine + ATP = dGMP + ADP + H(+). The enzyme catalyses 2'-deoxyadenosine + ATP = dAMP + ADP + H(+). Its function is as follows. Phosphorylates deoxyguanosine and deoxyadenosine in the mitochondrial matrix, with the highest efficiency for deoxyguanosine. In non-replicating cells, where cytosolic dNTP synthesis is down-regulated, mtDNA synthesis depends solely on DGUOK and TK2. Phosphorylates certain nucleoside analogs. Widely used as target of antiviral and chemotherapeutic agents. The polypeptide is Deoxyguanosine kinase, mitochondrial (Dguok) (Mus musculus (Mouse)).